Here is a 152-residue protein sequence, read N- to C-terminus: Protein-export protein SecB (152 aa).

It belongs to the SecB family. Homotetramer, a dimer of dimers. One homotetramer interacts with 1 SecA dimer.

It localises to the cytoplasm. Its function is as follows. One of the proteins required for the normal export of preproteins out of the cell cytoplasm. It is a molecular chaperone that binds to a subset of precursor proteins, maintaining them in a translocation-competent state. It also specifically binds to its receptor SecA. In Rickettsia conorii (strain ATCC VR-613 / Malish 7), this protein is Protein-export protein SecB.